The chain runs to 54 residues: Gene product 16.6 (54 aa).

The protein belongs to the phi29likevirus gp16.6 family.

This chain is Gene product 16.6 (16.6), found in Bacillus subtilis (Bacteriophage phi-15).